The primary structure comprises 206 residues: Ribosomal RNA small subunit methyltransferase G (206 aa).

S-adenosyl-L-methionine-binding positions include Gly-74, Leu-79, 125 to 126, and Arg-140; that span reads VE.

Belongs to the methyltransferase superfamily. RNA methyltransferase RsmG family.

It localises to the cytoplasm. The enzyme catalyses guanosine(527) in 16S rRNA + S-adenosyl-L-methionine = N(7)-methylguanosine(527) in 16S rRNA + S-adenosyl-L-homocysteine. Specifically methylates the N7 position of guanine in position 527 of 16S rRNA. The chain is Ribosomal RNA small subunit methyltransferase G from Shewanella sp. (strain MR-4).